The sequence spans 1046 residues: UDP-N-acetylglucosamine--peptide N-acetylglucosaminyltransferase 110 kDa subunit (1046 aa).

Ala2 is subject to N-acetylalanine. Ser3 and Ser4 each carry phosphoserine; by GSK3-beta; alternate. O-linked (GlcNAc) serine; alternate glycans are attached at residues Ser3 and Ser4. At Ser20 the chain carries Phosphoserine. TPR repeat units lie at residues 21–54, 89–122, 123–156, 157–190, 191–224, 225–258, 259–292, 293–326, 327–360, 361–394, 395–428, and 429–462; these read FQGL…EPDN, AEAY…KPDF, IDGY…NPDL, YCVR…QPNF, AVAW…DPNF, LDAY…SPNH, AVVH…QPHF, PDAY…CPTH, ADSL…FPEF, AAAH…SPTF, ADAY…NPAF, and ADAH…KPDF. Ser399 carries O-linked (GlcNAc) serine; by autocatalysis glycosylation. At Thr454 the chain carries Phosphothreonine. One copy of the TPR 13; truncated repeat lies at 463–473; it reads PDAYCNLAHCL. The DFP motif signature appears at 464–466; it reads DAY. Positions 487–503 match the Nuclear localization signal motif; sequence KKLVSIVAEQLEKNRLP. The Proton acceptor role is filled by His508. UDP-binding positions include Gln849, Lys852, 906–908, 911–914, 930–932, and Asp935; these read APK, HVRR, and HTT. Tyr989 bears the Phosphotyrosine mark. A required for phosphatidylinositol 3,4,5-triphosphate binding region spans residues 991-1010; the sequence is KKIRGKVWKQRISSPLFNTK.

This sequence belongs to the glycosyltransferase 41 family. O-GlcNAc transferase subfamily. Monomer; may exist in different oligomerization states in cells. Homotrimer, oligomerizes via TPR repeats 6 and 7. Trimerization is not necessary for activity in vitro, however it increases affinity for UDP-GlcNAc. Component of a THAP1/THAP3-HCFC1-OGT complex. Component of the NSL complex at least composed of MOF/KAT8, KANSL1, KANSL2, KANSL3, MCRS1, PHF20, OGT1/OGT, WDR5 and HCFC1. Found in a complex with KIF5B, RHOT1, RHOT2 and TRAK1. Found in a complex composed of at least SINHCAF, SIN3A, HDAC1, SAP30, RBBP4, OGT and TET1. Component of a complex composed of KMT2E/MLL5, OGT and USP7; the complex stabilizes KMT2E/MLL5, preventing KMT2E/MLL5 ubiquitination and proteasomal-mediated degradation. Interacts (via TPRs 1-6) with SIN3A; the interaction mediates transcriptional repression in parallel with histone deacetylase. Interacts (via TPR 5-6) with TET1, TET2 and TET3. Interacts (via TPR repeats 6 and 7) with ATXN10. Interacts with NSD2. Interacts with PROSER1; this interaction mediates TET2 O-GlcNAcylation and stability by promoting the interaction between OGT and TET2. Post-translationally, ubiquitinated by the SCF(FBXO31) complex, leading to its proteasomal degradation. Phosphorylation on Ser-3 or Ser-4 by GSK3-beta positively regulates its activity. Phosphorylation at Thr-454 by AMPK promotes nuclear localization. In terms of processing, glycosylated via autocatalysis; O-GlcNAcylation at Ser-399 promotes nuclear localization.

It localises to the cytoplasm. The protein localises to the nucleus. It is found in the cell membrane. The protein resides in the mitochondrion membrane. Its subcellular location is the cell projection. The enzyme catalyses L-seryl-[protein] + UDP-N-acetyl-alpha-D-glucosamine = 3-O-(N-acetyl-beta-D-glucosaminyl)-L-seryl-[protein] + UDP + H(+). It catalyses the reaction L-threonyl-[protein] + UDP-N-acetyl-alpha-D-glucosamine = 3-O-(N-acetyl-beta-D-glucosaminyl)-L-threonyl-[protein] + UDP + H(+). It participates in protein modification; protein glycosylation. With respect to regulation, subject to product inhibition by UDP. Functionally, catalyzes the transfer of a single N-acetylglucosamine from UDP-GlcNAc to a serine or threonine residue in cytoplasmic and nuclear proteins resulting in their modification with a beta-linked N-acetylglucosamine (O-GlcNAc). Glycosylates a large and diverse number of proteins including histone H2B, AKT1, AMPK, ATG4B, CAPRIN1, EZH2, FNIP1, GSDMD, KRT7, LMNA, LMNB1, LMNB2, RPTOR, HOXA1, PFKL, KMT2E/MLL5, MAPT/TAU, TET2, RBL2, RET, NOD2 and HCFC1. Can regulate their cellular processes via cross-talk between glycosylation and phosphorylation or by affecting proteolytic processing. Involved in insulin resistance in muscle and adipocyte cells via glycosylating insulin signaling components and inhibiting the 'Thr-308' phosphorylation of AKT1, enhancing IRS1 phosphorylation and attenuating insulin signaling. Involved in glycolysis regulation by mediating glycosylation of 6-phosphofructokinase PFKL, inhibiting its activity. Plays a key role in chromatin structure by mediating O-GlcNAcylation of 'Ser-112' of histone H2B: recruited to CpG-rich transcription start sites of active genes via its interaction with TET proteins (TET1, TET2 or TET3). As part of the NSL complex indirectly involved in acetylation of nucleosomal histone H4 on several lysine residues. O-GlcNAcylation of 'Ser-75' of EZH2 increases its stability, and facilitating the formation of H3K27me3 by the PRC2/EED-EZH2 complex. Stabilizes KMT2E/MLL5 by mediating its glycosylation, thereby preventing KMT2E/MLL5 ubiquitination. Regulates circadian oscillation of the clock genes and glucose homeostasis in the liver. Stabilizes clock proteins BMAL1 and CLOCK through O-glycosylation, which prevents their ubiquitination and subsequent degradation. Promotes the CLOCK-BMAL1-mediated transcription of genes in the negative loop of the circadian clock such as PER1/2 and CRY1/2. O-glycosylates HCFC1 and regulates its proteolytic processing and transcriptional activity. Component of a THAP1/THAP3-HCFC1-OGT complex that is required for the regulation of the transcriptional activity of RRM1. Regulates mitochondrial motility in neurons by mediating glycosylation of TRAK1. Promotes autophagy by mediating O-glycosylation of ATG4B. Acts as a regulator of mTORC1 signaling by mediating O-glycosylation of RPTOR and FNIP1: O-GlcNAcylation of RPTOR in response to glucose sufficiency promotes activation of the mTORC1 complex. The sequence is that of UDP-N-acetylglucosamine--peptide N-acetylglucosaminyltransferase 110 kDa subunit (Ogt) from Mus musculus (Mouse).